A 565-amino-acid polypeptide reads, in one-letter code: MKMRVETALAILLVLISIQQCYGGVSNYTCTCFSSGNRSDILESNCSTSCNCRPDRDQWVCLCPANGFPVIAIGGSNSSCFTSCNCSAGATKSSKKQYLSRKLVIVILLFCGVLISLAFLASMICYICRKDKFSGQTPSVSSDRESSWHSSANLINRKSSVSQSKISISSSVAGCFFQNASLFCVSKPETIHGAIFQFSYTELEQATNKFSSNSVIGHGGSSCVYRGQLKDGKTAAIKRLNTPKGDDTDTLFSTEVELLSRLHHYHVVPLIGYCSEFHGKHAERLLVFEYMSYGSLRDCLDGELGEKMTWNIRISVALGAARGLEYLHEAAAPRILHRDVKSTNILLDENWHAKITDLGMAKCLSSDGLQSGSSSPTTGLQGTFGYFAPEYAIAGCASQMSDVFSFGVVLLELITGRKPIQKPSNNKGEESLVIWAVPRLQDSKRVIEELPDPRLNGKFAEEEMQIMAYLAKECLLLDPESRPTMREVVQILSTITPDTSSRRRNFPINYLFQSNEKKKESKVGWSRGGSKSGQEEETVDLTEPRFESFCLPNVKPVLLEPSAHI.

The signal sequence occupies residues 1 to 23 (MKMRVETALAILLVLISIQQCYG). Residues 24–103 (GVSNYTCTCF…SKKQYLSRKL (80 aa)) are Extracellular-facing. Residues asparagine 27, asparagine 37, asparagine 45, asparagine 77, and asparagine 85 are each glycosylated (N-linked (GlcNAc...) asparagine). A helical membrane pass occupies residues 104-124 (VIVILLFCGVLISLAFLASMI). At 125-565 (CYICRKDKFS…PVLLEPSAHI (441 aa)) the chain is on the cytoplasmic side. Residues 210 to 495 (FSSNSVIGHG…REVVQILSTI (286 aa)) enclose the Protein kinase domain. Residues 216–224 (IGHGGSSCV) and lysine 238 each bind ATP. Aspartate 339 serves as the catalytic Proton acceptor. 2 positions are modified to phosphothreonine: threonine 378 and threonine 383. A Phosphotyrosine modification is found at tyrosine 391.

This sequence belongs to the protein kinase superfamily. Ser/Thr protein kinase family. As to quaternary structure, interacts with ARAC5. Phosphorylated. Mostly expressed in leaf primordia, root and shoot apical meristems, lateral root primordia, and stele of older roots and hypocotyls. In leaves and cotyledons, highest levels observed in trichomes, vasculatures, and hydathode endothem.

It localises to the cell membrane. The protein resides in the prevacuolar compartment membrane. It is found in the endosome. It catalyses the reaction L-seryl-[protein] + ATP = O-phospho-L-seryl-[protein] + ADP + H(+). It carries out the reaction L-threonyl-[protein] + ATP = O-phospho-L-threonyl-[protein] + ADP + H(+). This is Receptor-like serine/threonine-protein kinase NCRK (NCRK) from Arabidopsis thaliana (Mouse-ear cress).